A 742-amino-acid chain; its full sequence is Synaptic vesicle glycoprotein 2A (742 aa).

Residues 1 to 57 are interaction with SYT1; the sequence is MEEGFRDRAAFIRGAKDIAKEVKKHAAKKVVKGLDRVQDEYSRRSYSRFEEEDDDDD. Topologically, residues 1-169 are cytoplasmic; it reads MEEGFRDRAA…GHGRFQWTLY (169 aa). Over residues 33–49 the composition is skewed to basic and acidic residues; the sequence is GLDRVQDEYSRRSYSRF. The segment at 33 to 144 is disordered; it reads GLDRVQDEYS…GRGEAQRRKE (112 aa). Serine 80 and serine 81 each carry phosphoserine. Threonine 84 carries the post-translational modification Phosphothreonine. Residues 122–137 are compositionally biased toward gly residues; the sequence is VRGGLSDGEGPPGGRG. Residue serine 127 is modified to Phosphoserine. The helical transmembrane segment at 170-190 threads the bilayer; that stretch reads FVLGLALMADGVEVFVVGFVL. At 191 to 205 the chain is on the extracellular side; the sequence is PSAEKDMCLSDSNKG. A helical transmembrane segment spans residues 206 to 226; sequence MLGLIVYLGMMVGAFLWGGLA. The Cytoplasmic segment spans residues 227 to 233; that stretch reads DRLGRRQ. The chain crosses the membrane as a helical span at residues 234-254; it reads CLLISLSVNSVFAFFSSFVQG. Topologically, residues 255-262 are extracellular; that stretch reads YGTFLFCR. A helical membrane pass occupies residues 263 to 283; sequence LLSGVGIGGSIPIVFSYFSEF. Over 284–294 the chain is Cytoplasmic; that stretch reads LAQEKRGEHLS. Residues 295 to 315 traverse the membrane as a helical segment; sequence WLCMFWMIGGVYAAAMAWAII. Residues 316 to 334 are Extracellular-facing; that stretch reads PHYGWSFQMGSAYQFHSWR. The chain crosses the membrane as a helical span at residues 335–355; sequence VFVLVCAFPSVFAIGALTTQP. The Cytoplasmic segment spans residues 356–447; it reads ESPRFFLENG…CFGPEYRRIT (92 aa). Serine 393 carries the phosphoserine modification. The chain crosses the membrane as a helical span at residues 448-468; it reads LMMMGVWFTMSFSYYGLTVWF. Residues 469-598 lie on the Extracellular side of the membrane; the sequence is PDMIRHLQAV…GTGEGAYMVY (130 aa). Phosphotyrosine is present on tyrosine 480. 3 N-linked (GlcNAc...) asparagine glycosylation sites follow: asparagine 498, asparagine 548, and asparagine 573. A helical membrane pass occupies residues 599–619; sequence FVSFLGTLAVLPGNIVSALLM. Residues 620-626 are Cytoplasmic-facing; the sequence is DKIGRLR. The chain crosses the membrane as a helical span at residues 627-647; it reads MLAGSSVMSCVSCFFLSFGNS. Residues 648 to 651 are Extracellular-facing; it reads ESAM. Residues 652–672 form a helical membrane-spanning segment; the sequence is IALLCLFGGVSIASWNALDVL. The Cytoplasmic segment spans residues 673 to 685; that stretch reads TVELYPSDKRTTA. Residues 686 to 708 traverse the membrane as a helical segment; sequence FGFLNALCKLAAVLGISIFTSFV. Residues 709 to 712 are Extracellular-facing; the sequence is GITK. Residues 713–731 traverse the membrane as a helical segment; the sequence is AAPILFASAALALGSSLAL. The Cytoplasmic segment spans residues 732 to 742; the sequence is KLPETRGQVLQ.

This sequence belongs to the major facilitator superfamily. Interacts with SYT1/synaptotagmin-1 in a calcium-dependent manner. Binds the adapter protein complex AP-2. In terms of assembly, (Microbial infection) Interacts with C.botulinum neurotoxin type A2 (BoNT/A, botA). Interaction is improved by glycosylation of SV2. Phosphorylation by CK1 of the N-terminal cytoplasmic domain regulates interaction with SYT1. In terms of processing, N-glycosylated.

It localises to the presynapse. The protein localises to the cytoplasmic vesicle. The protein resides in the secretory vesicle. Its subcellular location is the synaptic vesicle membrane. In terms of biological role, plays a role in the control of regulated secretion in neural and endocrine cells, enhancing selectively low-frequency neurotransmission. Positively regulates vesicle fusion by maintaining the readily releasable pool of secretory vesicles. Functionally, (Microbial infection) Receptor for the C.botulinum neurotoxin type A2 (BoNT/A, botA); glycosylation is not essential but enhances the interaction. Probably also serves as a receptor for the closely related C.botulinum neurotoxin type A1. The chain is Synaptic vesicle glycoprotein 2A (SV2A) from Homo sapiens (Human).